A 338-amino-acid chain; its full sequence is Oligopeptide transport ATP-binding protein OppD (338 aa).

Residues 7–257 (LEAKQVSVAF…PKHPYTRSLL (251 aa)) enclose the ABC transporter domain. 43–50 (GESGSGKS) lines the ATP pocket.

Belongs to the ABC transporter superfamily. The complex is composed of two ATP-binding proteins (OppD and OppF), two transmembrane proteins (OppB and OppC) and a solute-binding protein (OppA).

The protein localises to the cell membrane. It catalyses the reaction a [peptide](out) + ATP + H2O = a [peptide](in) + ADP + phosphate + H(+). Functionally, part of the ABC transporter complex OppABCDF involved in the uptake of oligopeptides. Probably responsible for energy coupling to the transport system. Essential for uptake of peptides larger than three amino acids and for growth in milk. This Lactococcus lactis subsp. cremoris (strain SK11) protein is Oligopeptide transport ATP-binding protein OppD.